Consider the following 301-residue polypeptide: GTPase Era (301 aa).

The 168-residue stretch at 6–173 folds into the Era-type G domain; that stretch reads KSGFVAIVGR…LEQTNANLEI (168 aa). A G1 region spans residues 14–21; it reads GRPNVGKS. Position 14–21 (14–21) interacts with GTP; that stretch reads GRPNVGKS. Residues 40-44 form a G2 region; it reads QTTRN. The segment at 61–64 is G3; it reads DTPG. Residues 61–65 and 123–126 contribute to the GTP site; these read DTPGI and NKID. The G4 stretch occupies residues 123-126; that stretch reads NKID. The segment at 152–154 is G5; it reads ISA. Positions 204–282 constitute a KH type-2 domain; that stretch reads TREEVPHSVA…FLEVWVKVQK (79 aa).

It belongs to the TRAFAC class TrmE-Era-EngA-EngB-Septin-like GTPase superfamily. Era GTPase family. In terms of assembly, monomer.

It localises to the cytoplasm. It is found in the cell membrane. Its function is as follows. An essential GTPase that binds both GDP and GTP, with rapid nucleotide exchange. Plays a role in 16S rRNA processing and 30S ribosomal subunit biogenesis and possibly also in cell cycle regulation and energy metabolism. This Listeria monocytogenes serotype 4a (strain HCC23) protein is GTPase Era.